A 220-amino-acid polypeptide reads, in one-letter code: Aspartic protease inhibitor 5 (220 aa).

The N-terminal stretch at 1-23 is a signal peptide; the sequence is MMKCLFLLCLCLLPIVVFSSTFT. Positions 24-32 are excised as a propeptide; it reads SQNLIDLPS. Residues 26 to 31 carry the Vacuolar targeting signal motif; that stretch reads NLIDLP. A glycan (N-linked (GlcNAc...) asparagine) is linked at Asn51. 2 disulfide bridges follow: Cys80/Cys125 and Cys174/Cys185.

Belongs to the protease inhibitor I3 (leguminous Kunitz-type inhibitor) family.

Its subcellular location is the vacuole. Functionally, inhibitor of cathepsin D (aspartic protease). May also inhibit trypsin and chymotrypsin (serine proteases). Protects the plant by inhibiting proteases of invading organisms. In Solanum tuberosum (Potato), this protein is Aspartic protease inhibitor 5.